We begin with the raw amino-acid sequence, 198 residues long: Lipid A 4'-phosphatase (198 aa).

A helical membrane pass occupies residues 143–165; that stretch reads AGQHTILQVTIGSLIAWGFAYLF.

It belongs to the lipid A LpxF 4'-phosphatase family.

The protein resides in the cell inner membrane. The protein operates within bacterial outer membrane biogenesis; LPS lipid A biosynthesis. Its function is as follows. Removes the 4'-phosphate group from tetra- and hexaacylated lipid A species, has no 1-phosphatase or Kdo hydrolase activity. Absence of the 4'-phosphate group renders the bacteria resistant to host-derived cationic antimicrobial peptides (CAMP), allowing it to camouflage itself from the host innate immune response, and plays a critical role in the long-term colonization of the host's stomach. This chain is Lipid A 4'-phosphatase, found in Helicobacter pylori (strain J99 / ATCC 700824) (Campylobacter pylori J99).